The following is a 512-amino-acid chain: ATP synthase subunit alpha (512 aa).

169-176 is an ATP binding site; that stretch reads GDRQTGKT.

The protein belongs to the ATPase alpha/beta chains family. F-type ATPases have 2 components, CF(1) - the catalytic core - and CF(0) - the membrane proton channel. CF(1) has five subunits: alpha(3), beta(3), gamma(1), delta(1), epsilon(1). CF(0) has three main subunits: a(1), b(2) and c(9-12). The alpha and beta chains form an alternating ring which encloses part of the gamma chain. CF(1) is attached to CF(0) by a central stalk formed by the gamma and epsilon chains, while a peripheral stalk is formed by the delta and b chains.

The protein resides in the cell inner membrane. The enzyme catalyses ATP + H2O + 4 H(+)(in) = ADP + phosphate + 5 H(+)(out). Its function is as follows. Produces ATP from ADP in the presence of a proton gradient across the membrane. The alpha chain is a regulatory subunit. This Ruegeria pomeroyi (strain ATCC 700808 / DSM 15171 / DSS-3) (Silicibacter pomeroyi) protein is ATP synthase subunit alpha.